The following is a 503-amino-acid chain: Serine/threonine-protein kinase chk-1 (503 aa).

The Protein kinase domain occupies 24–286 (YRVVQTLGEG…IEQIQADPWY (263 aa)). ATP contacts are provided by residues 30–38 (LGEGAFGEV) and Lys-54. The active-site Proton acceptor is the Asp-150. The interval 320 to 346 (SAKRRHLETPNEKSTLAERQNASFSQP) is disordered. The span at 331–346 (EKSTLAERQNASFSQP) shows a compositional bias: polar residues. Ser-344 carries the post-translational modification Phosphoserine.

The protein belongs to the protein kinase superfamily. CAMK Ser/Thr protein kinase family. NIM1 subfamily. In terms of tissue distribution, expressed in the germline.

Its subcellular location is the cytoplasm. The protein localises to the nucleus. It localises to the perinuclear region. It catalyses the reaction L-seryl-[protein] + ATP = O-phospho-L-seryl-[protein] + ADP + H(+). The catalysed reaction is L-threonyl-[protein] + ATP = O-phospho-L-threonyl-[protein] + ADP + H(+). Its function is as follows. Serine/threonine-protein kinase which is required for checkpoint-mediated cell cycle arrest and activation of DNA repair in response to the presence of DNA damage or unreplicated DNA. May also negatively regulate cell cycle progression during unperturbed cell cycles. Required for checkpoint mediated cell cycle arrest in response to DNA damage in germline cells. Delays cell-cycle reentry of the Z2 and Z3 primordial germ cells in response to transcription-induced DNA damage as they emerge from cell cycle arrest in L1 larvae. Essential for embryogenesis. In Caenorhabditis elegans, this protein is Serine/threonine-protein kinase chk-1.